Reading from the N-terminus, the 124-residue chain is Small ribosomal subunit protein uS13 (124 aa).

The segment at 98 to 124 (VRGQRTRCNARTRKGPRKTVGAKRKEK) is disordered.

The protein belongs to the universal ribosomal protein uS13 family. In terms of assembly, part of the 30S ribosomal subunit. Forms a loose heterodimer with protein S19. Forms two bridges to the 50S subunit in the 70S ribosome.

Functionally, located at the top of the head of the 30S subunit, it contacts several helices of the 16S rRNA. In the 70S ribosome it contacts the 23S rRNA (bridge B1a) and protein L5 of the 50S subunit (bridge B1b), connecting the 2 subunits; these bridges are implicated in subunit movement. Contacts the tRNAs in the A and P-sites. The sequence is that of Small ribosomal subunit protein uS13 from Dictyoglomus thermophilum (strain ATCC 35947 / DSM 3960 / H-6-12).